The following is a 394-amino-acid chain: Guanine nucleotide-binding protein G(s) subunit alpha isoforms short (394 aa).

The interval methionine 1–asparagine 23 is disordered. Residue glycine 2 is the site of N-palmitoyl glycine attachment. Residue cysteine 3 is the site of S-palmitoyl cysteine attachment. Basic and acidic residues predominate over residues lysine 8 to asparagine 23. Residues alanine 39–leucine 394 enclose the G-alpha domain. The G1 motif stretch occupies residues arginine 42–threonine 55. Position 47 to 55 (glycine 47 to threonine 55) interacts with GTP. A Mg(2+)-binding site is contributed by serine 54. The interval phenylalanine 68–threonine 90 is disordered. The tract at residues aspartate 196–threonine 204 is G2 motif. GTP is bound by residues leucine 197–threonine 204, aspartate 223–glutamine 227, and asparagine 292–aspartate 295. Threonine 204 contacts Mg(2+). Positions phenylalanine 219–arginine 228 are G3 motif. Positions isoleucine 288–aspartate 295 are G4 motif. Lysine 300 participates in a covalent cross-link: Glycyl lysine isopeptide (Lys-Gly) (interchain with G-Cter in ubiquitin). A Phosphoserine modification is found at serine 352. Residues threonine 364–threonine 369 are G5 motif. Alanine 366 provides a ligand contact to GTP.

Belongs to the G-alpha family. G(s) subfamily. In terms of assembly, heterotrimeric G proteins are composed of 3 units; alpha, beta and gamma. The alpha chain contains the guanine nucleotide binding site. Component of the TAS2R14-GNAS2 complex, consisting of TAS2R14, GNAS2, GNB1 and GNG2; within the complex interacts with TAS2R14; this complex plays a role in the perception of bitterness. Interacts with CRY1; the interaction may block GPCR-mediated regulation of cAMP concentrations. Interacts with ADCY6 and stimulates its adenylyl cyclase activity. Interacts with ADCY2 and ADCY5. Interacts (GDP-bound form) with RIC8B; promoting GNAS folding and association with the plasma membrane. Stimulates the ADCY5 adenylyl cyclase activity. Interaction with SASH1. Interacts with GASL2L2.

Its subcellular location is the cell membrane. The enzyme catalyses GTP + H2O = GDP + phosphate + H(+). Its function is as follows. Guanine nucleotide-binding proteins (G proteins) function as transducers in numerous signaling pathways controlled by G protein-coupled receptors (GPCRs). The alpha chain contains the guanine nucleotide binding site and alternates between an active, GTP-bound state and an inactive, GDP-bound state. Signaling by an activated GPCR promotes GDP release and GTP binding. The alpha subunit has a low GTPase activity that converts bound GTP to GDP, thereby terminating the signal. Both GDP release and GTP hydrolysis are modulated by numerous regulatory proteins. Signaling involves the activation of adenylyl cyclases, resulting in increased levels of the signaling molecule cAMP. Functions downstream of beta-adrenergic receptors. Stimulates the Ras signaling pathway via RAPGEF2. In Mus musculus (Mouse), this protein is Guanine nucleotide-binding protein G(s) subunit alpha isoforms short (Gnas).